Reading from the N-terminus, the 67-residue chain is Conotoxin TsMMSK-011 (67 aa).

The N-terminal stretch at 1–20 (MMSKLGVLLTICLLLFPLTA) is a signal peptide. A propeptide spanning residues 21-50 (VQLDGDQPADLPALRTQDISTDHSPWFDPV) is cleaved from the precursor. 3 disulfide bridges follow: Cys-53-Cys-65, Cys-54-Cys-61, and Cys-58-Cys-64. A 4-hydroxyproline modification is found at Pro-63.

The protein belongs to the conotoxin M superfamily. As to expression, expressed by the venom duct.

It localises to the secreted. In Conus tessulatus (Tessellate cone), this protein is Conotoxin TsMMSK-011.